A 162-amino-acid chain; its full sequence is Photosystem II extrinsic protein V (162 aa).

Residues 1-25 form the signal peptide; sequence MLKRCLWLVVTVLFAWQVFNGTAIA. Heme c-binding residues include C62, C65, H66, and H117.

The protein belongs to the cytochrome c family. PsbV subfamily. As to quaternary structure, PSII is composed of 1 copy each of membrane proteins PsbA, PsbB, PsbC, PsbD, PsbE, PsbF, PsbH, PsbI, PsbJ, PsbK, PsbL, PsbM, PsbT, PsbX, PsbY, PsbZ, Psb30/Ycf12, peripheral proteins PsbO, CyanoQ (PsbQ), PsbU, PsbV and a large number of cofactors. It forms dimeric complexes. Requires heme c as cofactor.

It is found in the cellular thylakoid membrane. Its function is as follows. One of the extrinsic, lumenal subunits of photosystem II (PSII). PSII is a light-driven water plastoquinone oxidoreductase, using light energy to abstract electrons from H(2)O, generating a proton gradient subsequently used for ATP formation. The extrinsic proteins stabilize the structure of photosystem II oxygen-evolving complex (OEC), the ion environment of oxygen evolution and protect the OEC against heat-induced inactivation. Low-potential cytochrome c that plays a role in the OEC of PSII. This chain is Photosystem II extrinsic protein V, found in Cyanothece sp. (strain PCC 7425 / ATCC 29141).